The sequence spans 126 residues: Holo-[acyl-carrier-protein] synthase (126 aa).

Mg(2+) is bound by residues Asp-6 and Glu-55.

It belongs to the P-Pant transferase superfamily. AcpS family. Mg(2+) serves as cofactor.

It localises to the cytoplasm. It catalyses the reaction apo-[ACP] + CoA = holo-[ACP] + adenosine 3',5'-bisphosphate + H(+). In terms of biological role, transfers the 4'-phosphopantetheine moiety from coenzyme A to a Ser of acyl-carrier-protein. This chain is Holo-[acyl-carrier-protein] synthase, found in Chlorobium limicola (strain DSM 245 / NBRC 103803 / 6330).